Consider the following 1115-residue polypeptide: Receptor-type tyrosine-protein phosphatase H (1115 aa).

The first 27 residues, 1-27 (MAGAGGGLGVWGNLVLLGLCSWTGARA), serve as a signal peptide directing secretion. Residues 28–754 (PAPNPGRNLT…VVCHTESAGV (727 aa)) lie on the Extracellular side of the membrane. Fibronectin type-III domains follow at residues 32–121 (PGRN…APNP), 122–209 (VRNL…TAHN), 210–299 (PVRN…APNP), 300–387 (VRNL…TAPN), 388–477 (PVRN…VPNA), 478–563 (VTSL…TAAT), 564–666 (APNE…TYPD), and 665–749 (PDTV…VCHT). Residues Asn35, Asn83, Asn172, Asn256, Asn285, Asn350, Asn434, Asn468, Asn556, and Asn642 are each glycosylated (N-linked (GlcNAc...) asparagine). The helical transmembrane segment at 755–775 (IAGAFVGILLFLILVGLLIFF) threads the bilayer. The Cytoplasmic portion of the chain corresponds to 776 to 1115 (LKRRNKKKQQ…AAIQAHKLEV (340 aa)). The Tyrosine-protein phosphatase domain occupies 820–1079 (FADEYQQLSL…VFLHQCILRF (260 aa)). Residue Cys1020 is the Phosphocysteine intermediate of the active site. 2 positions are modified to phosphotyrosine: Tyr1094 and Tyr1102.

The protein belongs to the protein-tyrosine phosphatase family. Receptor class 3 subfamily. In terms of assembly, homodimer; disulfide-linked. Interacts with LCK. Interacts (phosphorylated form) with GRB2 (via SH2 domain). Interacts (phosphorylated form) with FYN (via SH2 domain). Interacts (via extracellular domain) with CEACAM20 (via extracellular domain); the interaction dephosphorylates CEACAM20. As to expression, expressed at high levels in the brain, spleen and liver and at lower levels in the heart and stomach. Expressed in pancreatic and colorectal cancer cells, but not in normal pancreas or colon. Expression in hepatocellular carcinoma is related to the differentiation status of the tumor and expression is inversely related to tumor aggressiveness.

The protein localises to the cell projection. The protein resides in the microvillus membrane. It is found in the apical cell membrane. Its subcellular location is the cytoplasm. It catalyses the reaction O-phospho-L-tyrosyl-[protein] + H2O = L-tyrosyl-[protein] + phosphate. Its activity is regulated as follows. Regulated by reversible dimerization. Dimerization reduces its catalytic activity. In terms of biological role, protein phosphatase that may contribute to contact inhibition of cell growth and motility by mediating the dephosphorylation of focal adhesion-associated substrates and thus negatively regulating integrin-promoted signaling processes. Induces apoptotic cell death by at least two distinct mechanisms: inhibition of cell survival signaling mediated by PI 3-kinase, Akt, and ILK and activation of a caspase-dependent proapoptotic pathway. Inhibits the basal activity of LCK and its activation in response to TCR stimulation and TCR-induced activation of MAP kinase and surface expression of CD69. Inhibits TCR-induced tyrosine phosphorylation of LAT and ZAP70. Inhibits both basal activity of DOK1 and its CD2-induced tyrosine phosphorylation. Induces dephosphorylation of BCAR1, focal adhesion kinase and SRC. Reduces migratory activity of activity of Jurkat cells. Reduces tyrosine phosphorylation of CEACAM20 and thereby contributes to suppress the intestinal immune response CEACAM20. This is Receptor-type tyrosine-protein phosphatase H (PTPRH) from Homo sapiens (Human).